The chain runs to 531 residues: MAKYIFITGGVLSSLGKGITSASIASILEEMGYRVTLQKLDPYLNVDAGTMSPYQHGEVYVTEDGAETDLDLGHYERFTNAVMTRDNNVTAGRIYYNVISKERKGDYLGATVQVIPHITEEIKESIKRVEKDNDIVIVEIGGTVGDIEGLPFLEAVRQLSLELGRKNSMFIHLTYVPYIKAAGELKTKPTQHSVKELRAIGIQPDMIICRADRELPKGIKSKIALFTNVKEEAVISAPDLEFSYEVPLKLKEQGIDRIITERLNLEHREVNLGKWKKIVNVLRNPEEEVNVALVGKYVELKDSYKSVIEALIHGGIANKVKVNVILKNSEQLDISELQEDIHGIMVPGGFGERGIRGKIEALNFGRENNIPTFGICLGMQLMAIEFARNVLGFSNANSTEFDPDTPFPVIDIMEEQKKVDKLGGTMRLGAYPCKVKENTLAHRIYQKDLIYERHRHRYEFNNRYRKDFESKGVVFSGTSPDDKLVEIMELKNHMWYLGCQFHPEFKSKPFAPHPLFRDFIRACLEYKRKFT.

The tract at residues 1–265 (MAKYIFITGG…DRIITERLNL (265 aa)) is amidoligase domain. S13 is a binding site for CTP. UTP is bound at residue S13. 14-19 (SLGKGI) lines the ATP pocket. Y54 is a binding site for L-glutamine. D71 lines the ATP pocket. Positions 71 and 139 each coordinate Mg(2+). Residues 146-148 (DIE), 186-191 (KTKPTQ), and K222 contribute to the CTP site. UTP-binding positions include 186–191 (KTKPTQ) and K222. The Glutamine amidotransferase type-1 domain maps to 290 to 529 (NVALVGKYVE…IRACLEYKRK (240 aa)). G349 is a binding site for L-glutamine. Residue C376 is the Nucleophile; for glutamine hydrolysis of the active site. L-glutamine contacts are provided by residues 377–380 (LGMQ), E400, and R457. Active-site residues include H502 and E504.

Belongs to the CTP synthase family. In terms of assembly, homotetramer.

The enzyme catalyses UTP + L-glutamine + ATP + H2O = CTP + L-glutamate + ADP + phosphate + 2 H(+). It catalyses the reaction L-glutamine + H2O = L-glutamate + NH4(+). It carries out the reaction UTP + NH4(+) + ATP = CTP + ADP + phosphate + 2 H(+). It functions in the pathway pyrimidine metabolism; CTP biosynthesis via de novo pathway; CTP from UDP: step 2/2. Its activity is regulated as follows. Allosterically activated by GTP, when glutamine is the substrate; GTP has no effect on the reaction when ammonia is the substrate. The allosteric effector GTP functions by stabilizing the protein conformation that binds the tetrahedral intermediate(s) formed during glutamine hydrolysis. Inhibited by the product CTP, via allosteric rather than competitive inhibition. Functionally, catalyzes the ATP-dependent amination of UTP to CTP with either L-glutamine or ammonia as the source of nitrogen. Regulates intracellular CTP levels through interactions with the four ribonucleotide triphosphates. The sequence is that of CTP synthase from Aquifex aeolicus (strain VF5).